The sequence spans 340 residues: Adenine deaminase (340 aa).

Zn(2+)-binding residues include His-17, His-19, and His-197. Glu-200 functions as the Proton donor in the catalytic mechanism. Asp-278 contributes to the Zn(2+) binding site. Position 279 (Asp-279) interacts with substrate.

The protein belongs to the metallo-dependent hydrolases superfamily. Adenosine and AMP deaminases family. Adenine deaminase type 2 subfamily. Requires Zn(2+) as cofactor.

The enzyme catalyses adenine + H2O + H(+) = hypoxanthine + NH4(+). Its function is as follows. Catalyzes the hydrolytic deamination of adenine to hypoxanthine. Plays an important role in the purine salvage pathway and in nitrogen catabolism. The protein is Adenine deaminase of Streptomyces coelicolor (strain ATCC BAA-471 / A3(2) / M145).